We begin with the raw amino-acid sequence, 549 residues long: MTLTSIRRGYHVIKTLLQYGLDEVLPPKMTPWYFTLARSSLFWIRNKHKSKPGGERLKLAMQELGPVYIKLGQMLSTRRDLLSDEWAIELAMLQDKVPPFDGVLARKAIEAELKASIESLFDDFDETPLASASISQVHTATLKSNGKAVVLKVLRPNVEAKILADLQLMSQTANLLEYFLGEGNRLRPAEVIEDYRVTILGELNLKLEALNAIKLRNNFLNSDALYVPYVYEEFCYPRLMVMERIYGIPVSDIAALKAQGTNFKLLAERGVELFFTQVFRDNFFHADMHPGNIFISRDHPENPYYIGLDCGIMGTLSEVDKRYLAENFLAFFNRDYHRIAQLYIESGWVSEKTDLQAFEQAIKVVCEPMFNKPLDEISFGHVLLELFRTARSFDIVVQPQLVLLEKTLLYIEGLGRQLYPQLDLWQTAKPFLEQWMAEQVGPKAMFKKVSTKLPYWSDKLPEFPELIYDNLKLGRKLLSSQQQMLDKYLKHQQQAHKSNYMLITSAVLLICGTLLFNQDATLWSPYVCLTSGVLMWFIGWRSRPKNRKF.

A Protein kinase domain is found at 123 to 501 (DFDETPLASA…QQQAHKSNYM (379 aa)). Residues 129–137 (LASASISQV) and Lys152 each bind ATP. Catalysis depends on Asp287, which acts as the Proton acceptor. Helical transmembrane passes span 499–516 (NYML…TLLF) and 521–540 (TLWS…FIGW).

Belongs to the ABC1 family. UbiB subfamily.

The protein localises to the cell inner membrane. It participates in cofactor biosynthesis; ubiquinone biosynthesis [regulation]. Its function is as follows. Is probably a protein kinase regulator of UbiI activity which is involved in aerobic coenzyme Q (ubiquinone) biosynthesis. This is Probable protein kinase UbiB from Shewanella sp. (strain W3-18-1).